The primary structure comprises 196 residues: 7-methyl-GTP pyrophosphatase (196 aa).

The active-site Proton acceptor is the Asp-69.

It belongs to the Maf family. YceF subfamily. It depends on a divalent metal cation as a cofactor.

The protein localises to the cytoplasm. It catalyses the reaction N(7)-methyl-GTP + H2O = N(7)-methyl-GMP + diphosphate + H(+). Nucleoside triphosphate pyrophosphatase that hydrolyzes 7-methyl-GTP (m(7)GTP). May have a dual role in cell division arrest and in preventing the incorporation of modified nucleotides into cellular nucleic acids. The chain is 7-methyl-GTP pyrophosphatase from Photorhabdus laumondii subsp. laumondii (strain DSM 15139 / CIP 105565 / TT01) (Photorhabdus luminescens subsp. laumondii).